Here is a 43-residue protein sequence, read N- to C-terminus: Defensin, isoforms B and C (43 aa).

Cystine bridges form between C3–C34, C20–C40, and C24–C42.

This sequence belongs to the invertebrate defensin family. Type 1 subfamily.

It is found in the secreted. Its function is as follows. Involved in anti Gram-positive activity of immune hemolymph of Z.atratus. The polypeptide is Defensin, isoforms B and C (Zophobas atratus (Giant mealworm beetle)).